We begin with the raw amino-acid sequence, 411 residues long: MDAVILCAGKGTRLMPLTENIPKPMLPVGGAPILERIINKIDKLVENIYLIVKYEKEIIINHFKNNDKIKFIEQTDIDGTGYAVLMAKNHISGDFLVINGDIIFDDDLTNIVNDDVKNIITLNEVDNPSNFGVIVVDNQNNIIELQEKPKNPKSNLINAGIYKFENKIFDILETLRPSERGEVELTDAIKELIKENNIKGIKLNGYWNDIGKPWDLLDANTHILKNIKTDIKGKIGKNVVIEGAVIIEEGTEIKPNTVIEGPAIIKSGAIVGPLAHIRPNTVLMENTGVGNSSEIKGSIIMKNSKVPHLSYIGDSIIGENCNMGCNTITANLRFDNKPVMVNIKEEKVKSVRKFGAIIGHNVKTGIQVSFMPGVKIGSNSWIGANCLINNDIEKDSFVYKKEEIIIKTKRK.

The interval 1–204 (MDAVILCAGK…ENNIKGIKLN (204 aa)) is pyrophosphorylase. UTP contacts are provided by residues 6–9 (LCAG), glutamine 74, and glycine 79. Threonine 80, glycine 132, glutamate 144, and asparagine 158 together coordinate N-acetyl-alpha-D-glucosamine 1-phosphate. The tract at residues 205-224 (GYWNDIGKPWDLLDANTHIL) is linker. Positions 225-411 (KNIKTDIKGK…EEIIIKTKRK (187 aa)) are N-acetyltransferase. Histidine 308 acts as the Proton acceptor in catalysis. 2 residues coordinate acetyl-CoA: alanine 384 and lysine 401.

The protein in the N-terminal section; belongs to the N-acetylglucosamine-1-phosphate uridyltransferase family. In the C-terminal section; belongs to the transferase hexapeptide repeat family.

It catalyses the reaction N-acetyl-alpha-D-glucosamine 1-phosphate + UTP + H(+) = UDP-N-acetyl-alpha-D-glucosamine + diphosphate. The catalysed reaction is alpha-D-glucosamine 1-phosphate + acetyl-CoA = N-acetyl-alpha-D-glucosamine 1-phosphate + CoA + H(+). Its pathway is nucleotide-sugar biosynthesis; UDP-N-acetyl-alpha-D-glucosamine biosynthesis; N-acetyl-alpha-D-glucosamine 1-phosphate from alpha-D-glucosamine 6-phosphate (route II): step 2/2. The protein operates within nucleotide-sugar biosynthesis; UDP-N-acetyl-alpha-D-glucosamine biosynthesis; UDP-N-acetyl-alpha-D-glucosamine from N-acetyl-alpha-D-glucosamine 1-phosphate: step 1/1. Its function is as follows. Catalyzes the last two sequential reactions in the de novo biosynthetic pathway for UDP-N-acetyl-glucosamine (UDP-GlcNAc). Responsible for the acetylation of GlcN-1-P to GlcNAc-1-P, and for the uridyl transfer from UTP to GlcNAc-1-P, to produce UDP-GlcNAc and pyrophosphate. This Methanococcus aeolicus (strain ATCC BAA-1280 / DSM 17508 / OCM 812 / Nankai-3) protein is Bifunctional protein GlmU.